Reading from the N-terminus, the 335-residue chain is DNA-directed RNA polymerase subunit alpha (335 aa).

Residues 1 to 233 (MTRTANEFLT…QQIAIFVDLQ (233 aa)) are alpha N-terminal domain (alpha-NTD). Residues 247 to 335 (VDPILLRPVD…MDDRFAYRSR (89 aa)) are alpha C-terminal domain (alpha-CTD).

The protein belongs to the RNA polymerase alpha chain family. In terms of assembly, homodimer. The RNAP catalytic core consists of 2 alpha, 1 beta, 1 beta' and 1 omega subunit. When a sigma factor is associated with the core the holoenzyme is formed, which can initiate transcription.

It carries out the reaction RNA(n) + a ribonucleoside 5'-triphosphate = RNA(n+1) + diphosphate. Functionally, DNA-dependent RNA polymerase catalyzes the transcription of DNA into RNA using the four ribonucleoside triphosphates as substrates. This chain is DNA-directed RNA polymerase subunit alpha, found in Acinetobacter baumannii (strain AB307-0294).